The primary structure comprises 169 residues: Small ribosomal subunit protein uS5 (169 aa).

Residues 14–77 (LQEKVVEVRR…EDAKKNLIVV (64 aa)) enclose the S5 DRBM domain.

It belongs to the universal ribosomal protein uS5 family. Part of the 30S ribosomal subunit. Contacts proteins S4 and S8.

Functionally, with S4 and S12 plays an important role in translational accuracy. In terms of biological role, located at the back of the 30S subunit body where it stabilizes the conformation of the head with respect to the body. This Clostridioides difficile (strain 630) (Peptoclostridium difficile) protein is Small ribosomal subunit protein uS5.